We begin with the raw amino-acid sequence, 241 residues long: Chloride intracellular channel protein 1 (241 aa).

An N-acetylalanine modification is found at alanine 2. The tract at residues 2–90 (AEEQPQVELF…EEFLEAVLCP (89 aa)) is required for insertion into the membrane. Position 13 is an N6-acetyllysine (lysine 13). Positions 24–27 (CPFS) match the G-site motif. The cysteines at positions 24 and 59 are disulfide-linked. A helical transmembrane segment spans residues 26–46 (FSQRLFMVLWLKGVTFNVTTV). A GST C-terminal domain is found at 93–233 (YPKLAALNPE…PDDEEIELAY (141 aa)). An N6-acetyllysine modification is found at lysine 119. At serine 121 the chain carries Phosphoserine. Lysine 131 carries the post-translational modification N6-acetyllysine. Serine 156 is subject to Phosphoserine. At tyrosine 233 the chain carries Phosphotyrosine.

It belongs to the chloride channel CLIC family. As to quaternary structure, monomer. Homodimer (in vitro). Interacts with TRAPPC2. Dimerization requires a conformation change that leads to the exposure of a large hydrophobic surface. In vivo, this may lead to membrane insertion.

The protein resides in the nucleus. The protein localises to the nucleus membrane. It localises to the cytoplasm. It is found in the cell membrane. Its subcellular location is the endoplasmic reticulum. The enzyme catalyses L-dehydroascorbate + 2 glutathione = glutathione disulfide + L-ascorbate. It catalyses the reaction chloride(in) = chloride(out). It carries out the reaction iodide(out) = iodide(in). The catalysed reaction is thiocyanate(in) = thiocyanate(out). The enzyme catalyses nitrate(in) = nitrate(out). It catalyses the reaction bromide(in) = bromide(out). It carries out the reaction fluoride(in) = fluoride(out). In terms of biological role, in the soluble state, catalyzes glutaredoxin-like thiol disulfide exchange reactions with reduced glutathione as electron donor. Reduces selenite and dehydroascorbate and may act as an antioxidant during oxidative stress response. Can insert into membranes and form voltage-dependent multi-ion conductive channels. Membrane insertion seems to be redox-regulated and may occur only under oxidizing conditions. Involved in regulation of the cell cycle. In Bos taurus (Bovine), this protein is Chloride intracellular channel protein 1 (CLIC1).